We begin with the raw amino-acid sequence, 415 residues long: Carboxypeptidase B (415 aa).

The signal sequence occupies residues 1 to 13; the sequence is MLLLLALVSVALA. The propeptide at 14 to 108 is activation peptide; the sequence is HASEEHFDGN…LESQFDSHTR (95 aa). The Peptidase M14 domain occupies 116 to 410; sequence KYNKWETIEA…LAVKYIANYV (295 aa). Residues Cys-171 and Cys-184 are joined by a disulfide bond. Zn(2+) is bound by residues His-174 and Glu-177. Substrate-binding positions include 174 to 177, Arg-232, and 249 to 250; these read HARE and NR. 2 disulfides stabilise this stretch: Cys-243-Cys-266 and Cys-257-Cys-271. Residue His-302 participates in Zn(2+) binding. Residues 303–304 and Tyr-354 each bind substrate; that span reads SY. Glu-376 functions as the Proton donor/acceptor in the catalytic mechanism.

Belongs to the peptidase M14 family. Zn(2+) is required as a cofactor.

It is found in the secreted. The protein resides in the zymogen granule lumen. The catalysed reaction is Preferential release of a C-terminal lysine or arginine amino acid.. The polypeptide is Carboxypeptidase B (Cpb1) (Rattus norvegicus (Rat)).